A 148-amino-acid polypeptide reads, in one-letter code: Large ribosomal subunit protein uL15 (148 aa).

The disordered stretch occupies residues 1–51; sequence MNLSNLKPAEGSTKTRKRIGRGPGSGLGGTSTRGHKGAKSRSGYKNKIGFE. Positions 21 to 31 are enriched in gly residues; that stretch reads RGPGSGLGGTS. The span at 33–44 shows a compositional bias: basic residues; the sequence is RGHKGAKSRSGY.

The protein belongs to the universal ribosomal protein uL15 family. In terms of assembly, part of the 50S ribosomal subunit.

Functionally, binds to the 23S rRNA. This Parabacteroides distasonis (strain ATCC 8503 / DSM 20701 / CIP 104284 / JCM 5825 / NCTC 11152) protein is Large ribosomal subunit protein uL15.